A 238-amino-acid polypeptide reads, in one-letter code: tRNA1(Val) (adenine(37)-N6)-methyltransferase (238 aa).

Belongs to the methyltransferase superfamily. tRNA (adenine-N(6)-)-methyltransferase family.

It localises to the cytoplasm. It carries out the reaction adenosine(37) in tRNA1(Val) + S-adenosyl-L-methionine = N(6)-methyladenosine(37) in tRNA1(Val) + S-adenosyl-L-homocysteine + H(+). Functionally, specifically methylates the adenine in position 37 of tRNA(1)(Val) (anticodon cmo5UAC). The chain is tRNA1(Val) (adenine(37)-N6)-methyltransferase from Shewanella baltica (strain OS195).